A 238-amino-acid chain; its full sequence is Ribonuclease PH (238 aa).

Phosphate contacts are provided by residues R86 and 124–126 (GTR).

This sequence belongs to the RNase PH family. Homohexameric ring arranged as a trimer of dimers.

It carries out the reaction tRNA(n+1) + phosphate = tRNA(n) + a ribonucleoside 5'-diphosphate. In terms of biological role, phosphorolytic 3'-5' exoribonuclease that plays an important role in tRNA 3'-end maturation. Removes nucleotide residues following the 3'-CCA terminus of tRNAs; can also add nucleotides to the ends of RNA molecules by using nucleoside diphosphates as substrates, but this may not be physiologically important. Probably plays a role in initiation of 16S rRNA degradation (leading to ribosome degradation) during starvation. This is Ribonuclease PH from Mesorhizobium japonicum (strain LMG 29417 / CECT 9101 / MAFF 303099) (Mesorhizobium loti (strain MAFF 303099)).